The primary structure comprises 784 residues: Melanoma-associated antigen D1 (784 aa).

Positions 41–67 (PTNQATAAASGPNASPQSSQPPSANEV) are disordered. Residues 47–65 (AAASGPNASPQSSQPPSAN) show a composition bias toward low complexity. The residue at position 97 (Tyr97) is a Phosphotyrosine. Composition is skewed to polar residues over residues 195 to 214 (PTAETQTQNINQAKMATSQA), 232 to 246 (AQTSADGSQAQNLES), 259 to 269 (NNLNVEESSSG), and 306 to 320 (LAWQNPSGWQNQPAR). Residues 195–339 (PTAETQTQNI…PARQTPPAWQ (145 aa)) form a disordered region. 19 consecutive repeat copies span residues 302–307 (WQTPLA), 308–313 (WQNPSG), 314–319 (WQNQPA), 338–343 (WQNPVA), 344–349 (WQNPVI), 350–355 (WPNPVI), 356–361 (WQNPVI), 362–367 (WPNPIV), 368–373 (WPGPVV), 374–379 (WPNPLA), 380–385 (WQNPPG), 386–391 (WQTPPG), 392–397 (WQTPPG), 398–403 (WQGPPD), 404–409 (WQGPPD), 410–415 (WPLPPD), 416–421 (WPLPPD), 422–427 (WPLPTD), and 428–433 (WPLPPD). Residues 302 to 450 (WQTPLAWQNP…VPPDWQNLRP (149 aa)) are 22 X 6 AA tandem repeats of W-[PQ]-X-P-X-X. A disordered region spans residues 379 to 418 (AWQNPPGWQTPPGWQTPPGWQGPPDWQGPPDWPLPPDWPL). Residues 383 to 403 (PPGWQTPPGWQTPPGWQGPPD) are compositionally biased toward low complexity. Residues 404 to 418 (WQGPPDWPLPPDWPL) show a composition bias toward pro residues. Residues 434–438 (WIPTD) form a 20; approximate repeat. 2 tandem repeats follow at residues 439–444 (WPVPPD) and 445–450 (WQNLRP). The segment at 441–471 (VPPDWQNLRPSPNLRPSPNSRASQNLGASQP) is disordered. Residues 447 to 461 (NLRPSPNLRPSPNSR) show a composition bias toward low complexity. An MAGE domain is found at 477-675 (LQERANKLVK…RDWTAQFMEA (199 aa)).

Interacts with DLX5, DLX7 and MSX2 and forms homomultimers. Interacts with UNC5A. Interacts with TRIM28 and PJA1. Interacts with NGFR/p75NTR and RORA.

The protein resides in the cytoplasm. It is found in the cell membrane. It localises to the nucleus. Functionally, involved in the apoptotic response after nerve growth factor (NGF) binding in neuronal cells. Inhibits cell cycle progression, and facilitates NGFR-mediated apoptosis. May act as a regulator of the function of DLX family members. May enhance ubiquitin ligase activity of RING-type zinc finger-containing E3 ubiquitin-protein ligases. Proposed to act through recruitment and/or stabilization of the Ubl-conjugating enzyme (E2) at the E3:substrate complex. Plays a role in the circadian rhythm regulation. May act as RORA co-regulator, modulating the expression of core clock genes such as BMAL1 and NFIL3, induced, or NR1D1, repressed. The sequence is that of Melanoma-associated antigen D1 (MAGED1) from Sus scrofa (Pig).